Consider the following 259-residue polypeptide: MSNNSNKRAPTTATQRLKQDYLRIKKDPVPYICAEPLPSNILEWHYVVRGPEMTPYEGGYYHGKLIFPREFPFKPPSIYMITPNGRFKCNTRLCLSITDFHPDTWNPAWSVSTILTGLLSFMVEKGPTLGSIETSDFTKKQLAAQSLVFNLKDKVFCELFPEVVEEIKQKQKAQDELSNRPQNLPLPDVVPDGELHRGQHGIQLLNGHAPAAGPNLAGLPQANRHHGLLGGALANLFVIVGFAAFAYTVKYVLRSIAQE.

Topologically, residues 1 to 226 are cytoplasmic; that stretch reads MSNNSNKRAP…AGLPQANRHH (226 aa). The region spanning 12 to 162 is the UBC core domain; the sequence is TATQRLKQDY…DKVFCELFPE (151 aa). Residue C94 is the Glycyl thioester intermediate of the active site. Residues 227–247 form a helical; Anchor for type IV membrane protein membrane-spanning segment; the sequence is GLLGGALANLFVIVGFAAFAY. At 248–259 the chain is on the lumenal side; sequence TVKYVLRSIAQE.

Belongs to the ubiquitin-conjugating enzyme family. In terms of assembly, interacts with murid herpesvirus 4 protein K3 (mK3).

The protein resides in the endoplasmic reticulum membrane. The enzyme catalyses S-ubiquitinyl-[E1 ubiquitin-activating enzyme]-L-cysteine + [E2 ubiquitin-conjugating enzyme]-L-cysteine = [E1 ubiquitin-activating enzyme]-L-cysteine + S-ubiquitinyl-[E2 ubiquitin-conjugating enzyme]-L-cysteine.. Its pathway is protein modification; protein ubiquitination. Catalyzes the covalent attachment of ubiquitin to other proteins. Seems to function in the selective degradation of misfolded membrane proteins from the endoplasmic reticulum (ERAD). In cooperation with the GATOR2 complex, catalyzes 'Lys-6'-linked ubiquitination of NPRL2. Functionally, in case of infection by the murid herpesvirus 4, its association with the viral E3 ligase K3 mediates ubiquitination of host surface class I (MHC-I) H-2D(b)/H2-D1 and H-2K(b)/H2-K1 molecules before they exit the endoplasmic reticulum, leading to their degradation by the ERAD system, thus blocking the immune detection of virus-infected cells. The complex formed with the murid herpesvirus 4 protein K3 mediates ubiquitination of lysine, as well as serine and threonine residues present in the cytoplasmic tail of surface class I molecules and promotes ubiquitination of hydroxylated serine or threonine residues via ester bonds instead of the classical isopeptide linkage. The sequence is that of Ubiquitin-conjugating enzyme E2 J2 (Ube2j2) from Mus musculus (Mouse).